Reading from the N-terminus, the 128-residue chain is Small ribosomal subunit protein uS14m (128 aa).

This sequence belongs to the universal ribosomal protein uS14 family. Component of the mitochondrial ribosome small subunit (28S) which comprises a 12S rRNA and about 30 distinct proteins. Interacts with LIAT1.

The protein resides in the mitochondrion. This Bos taurus (Bovine) protein is Small ribosomal subunit protein uS14m (MRPS14).